Reading from the N-terminus, the 104-residue chain is Gastrin (104 aa).

Residues 1-21 (MQRLCVCVLILALALTAFSEA) form the signal peptide. The interval 22–49 (SWKPRSQLQDAPSGPGANGGLEPHWLNR) is disordered. A propeptide spanning residues 22–58 (SWKPRSQLQDAPSGPGANGGLEPHWLNRLGPASHHRW) is cleaved from the precursor. Residues Gln-59 and Gln-76 each carry the pyrrolidone carboxylic acid modification. Residue Tyr-87 is modified to Sulfotyrosine. At Phe-92 the chain carries Phenylalanine amide. At Ser-96 the chain carries Phosphoserine. A propeptide spanning residues 96 to 104 (SAEDGDQHP) is cleaved from the precursor.

It belongs to the gastrin/cholecystokinin family.

The protein localises to the secreted. Functionally, gastrin stimulates the stomach mucosa to produce and secrete hydrochloric acid and the pancreas to secrete its digestive enzymes. It also stimulates smooth muscle contraction and increases blood circulation and water secretion in the stomach and intestine. In Felis catus (Cat), this protein is Gastrin (GAST).